We begin with the raw amino-acid sequence, 447 residues long: Tubulin beta-1 chain (447 aa).

Positions 11, 69, 138, 142, 143, 144, 204, and 226 each coordinate GTP. Glu69 contributes to the Mg(2+) binding site. The interval 427 to 447 is disordered; it reads EATADEDAEFEEEQEAEVEEN. Over residues 429-447 the composition is skewed to acidic residues; the sequence is TADEDAEFEEEQEAEVEEN.

The protein belongs to the tubulin family. In terms of assembly, dimer of alpha and beta chains. A typical microtubule is a hollow water-filled tube with an outer diameter of 25 nm and an inner diameter of 15 nM. Alpha-beta heterodimers associate head-to-tail to form protofilaments running lengthwise along the microtubule wall with the beta-tubulin subunit facing the microtubule plus end conferring a structural polarity. Microtubules usually have 13 protofilaments but different protofilament numbers can be found in some organisms and specialized cells. Requires Mg(2+) as cofactor.

The protein resides in the cytoplasm. It is found in the cytoskeleton. Tubulin is the major constituent of microtubules, a cylinder consisting of laterally associated linear protofilaments composed of alpha- and beta-tubulin heterodimers. Microtubules grow by the addition of GTP-tubulin dimers to the microtubule end, where a stabilizing cap forms. Below the cap, tubulin dimers are in GDP-bound state, owing to GTPase activity of alpha-tubulin. The protein is Tubulin beta-1 chain of Glossina morsitans morsitans (Savannah tsetse fly).